Here is a 79-residue protein sequence, read N- to C-terminus: MSDIEERVKKIIIEQLGVKEEEVKSEASFVDDLGADSLDTVELVMALEEEFDTEIPDEEAEKITTVQSAIDYVNAHKDA.

One can recognise a Carrier domain in the interval 2-77 (SDIEERVKKI…SAIDYVNAHK (76 aa)). At Ser37 the chain carries O-(pantetheine 4'-phosphoryl)serine.

The protein belongs to the acyl carrier protein (ACP) family. Post-translationally, 4'-phosphopantetheine is transferred from CoA to a specific serine of apo-ACP by AcpS. This modification is essential for activity because fatty acids are bound in thioester linkage to the sulfhydryl of the prosthetic group.

It localises to the cytoplasm. Its pathway is lipid metabolism; fatty acid biosynthesis. Its function is as follows. Carrier of the growing fatty acid chain in fatty acid biosynthesis. The protein is Acyl carrier protein of Pseudoalteromonas atlantica (strain T6c / ATCC BAA-1087).